Here is a 250-residue protein sequence, read N- to C-terminus: 5-oxoprolinase subunit A (250 aa).

The protein belongs to the LamB/PxpA family. Forms a complex composed of PxpA, PxpB and PxpC.

It catalyses the reaction 5-oxo-L-proline + ATP + 2 H2O = L-glutamate + ADP + phosphate + H(+). Catalyzes the cleavage of 5-oxoproline to form L-glutamate coupled to the hydrolysis of ATP to ADP and inorganic phosphate. The chain is 5-oxoprolinase subunit A from Paraburkholderia phytofirmans (strain DSM 17436 / LMG 22146 / PsJN) (Burkholderia phytofirmans).